A 642-amino-acid polypeptide reads, in one-letter code: Threonine--tRNA ligase (642 aa).

Positions 1–61 (MPIITLPDGS…EADASLAIIT (61 aa)) constitute a TGS domain. The tract at residues 243-534 (DHRKIGKQLD…LTEEYAGLFP (292 aa)) is catalytic. Zn(2+)-binding residues include Cys334, His385, and His511.

Belongs to the class-II aminoacyl-tRNA synthetase family. Homodimer. It depends on Zn(2+) as a cofactor.

It localises to the cytoplasm. The catalysed reaction is tRNA(Thr) + L-threonine + ATP = L-threonyl-tRNA(Thr) + AMP + diphosphate + H(+). In terms of biological role, catalyzes the attachment of threonine to tRNA(Thr) in a two-step reaction: L-threonine is first activated by ATP to form Thr-AMP and then transferred to the acceptor end of tRNA(Thr). Also edits incorrectly charged L-seryl-tRNA(Thr). In Aeromonas hydrophila subsp. hydrophila (strain ATCC 7966 / DSM 30187 / BCRC 13018 / CCUG 14551 / JCM 1027 / KCTC 2358 / NCIMB 9240 / NCTC 8049), this protein is Threonine--tRNA ligase.